Here is a 690-residue protein sequence, read N- to C-terminus: BURP domain-containing protein 14 (690 aa).

A signal peptide spans 1-26 (MAPPRHARLVAATIAVLLCHLPRSAA). A disordered region spans residues 134–163 (GSSWSKSSSDGDGAAAAAAPAGGGGGGGGG). A compositionally biased stretch (low complexity) spans 135 to 153 (SSWSKSSSDGDGAAAAAAP). Residues 154–163 (AGGGGGGGGG) are compositionally biased toward gly residues. N178 is a glycosylation site (N-linked (GlcNAc...) asparagine). A compositionally biased stretch (gly residues) spans 201–211 (SNGGGGGGGGV). Residues 201 to 232 (SNGGGGGGGGVDSFRRYGKGSQGRNDSFTSYE) are disordered. Residues N225, N317, N379, N432, N450, and N601 are each glycosylated (N-linked (GlcNAc...) asparagine). The 213-residue stretch at 477-689 (FFRERDLVAG…FQGDMTWTVA (213 aa)) folds into the BURP domain.

In terms of tissue distribution, expressed in panicles.

This Oryza sativa subsp. japonica (Rice) protein is BURP domain-containing protein 14 (BURP14).